The sequence spans 486 residues: Shugoshin-1 (486 aa).

Residues I71–K154 are a coiled coil. Disordered regions lie at residues M137–T163, Y187–E209, H222–N251, A323–S346, P382–P403, and T418–A467. A compositionally biased stretch (basic and acidic residues) spans E331 to S346. The segment covering Q387–S396 has biased composition (basic residues). A compositionally biased stretch (polar residues) spans A423–Q433.

The protein belongs to the shugoshin family. Highly expressed in roots. Expressed in panicles. Expressed at low levels in leaves.

The protein resides in the nucleus. Its subcellular location is the nucleolus. It is found in the chromosome. It localises to the centromere. Plays a central role in chromosome cohesion during meiosis I by preventing premature dissociation of cohesin complex from centromeres after prophase, when most of cohesin complex dissociates from chromosomes arms. Required for the timely assembly and maintenance of synaptonemal complex (SC) during early prophase I. Required for maintenance of centromeric cohesion before prophase II and correct segregation of chromatids during meiosis II. Has apparently no function in mitosis. The protein is Shugoshin-1 of Oryza sativa subsp. japonica (Rice).